Here is a 389-residue protein sequence, read N- to C-terminus: tRNA-specific 2-thiouridylase MnmA (389 aa).

Residues 34–41 and L60 contribute to the ATP site; that span reads AMSGGVDS. C128 acts as the Nucleophile in catalysis. C128 and C225 are joined by a disulfide. Position 152 (G152) interacts with ATP. The interaction with tRNA stretch occupies residues 174–176; it reads RDQ. Catalysis depends on C225, which acts as the Cysteine persulfide intermediate.

Belongs to the MnmA/TRMU family.

Its subcellular location is the cytoplasm. The catalysed reaction is S-sulfanyl-L-cysteinyl-[protein] + uridine(34) in tRNA + AH2 + ATP = 2-thiouridine(34) in tRNA + L-cysteinyl-[protein] + A + AMP + diphosphate + H(+). Its function is as follows. Catalyzes the 2-thiolation of uridine at the wobble position (U34) of tRNA, leading to the formation of s(2)U34. In Paracoccus denitrificans (strain Pd 1222), this protein is tRNA-specific 2-thiouridylase MnmA.